The primary structure comprises 341 residues: NADH-quinone oxidoreductase subunit H 1 (341 aa).

9 consecutive transmembrane segments (helical) span residues I7 to L27, P46 to F66, F80 to F100, V111 to G131, L157 to V177, A183 to I203, Y244 to S264, V273 to I293, and I305 to A325.

It belongs to the complex I subunit 1 family. NDH-1 is composed of 14 different subunits. Subunits NuoA, H, J, K, L, M, N constitute the membrane sector of the complex.

The protein localises to the cell inner membrane. It carries out the reaction a quinone + NADH + 5 H(+)(in) = a quinol + NAD(+) + 4 H(+)(out). NDH-1 shuttles electrons from NADH, via FMN and iron-sulfur (Fe-S) centers, to quinones in the respiratory chain. The immediate electron acceptor for the enzyme in this species is believed to be ubiquinone. Couples the redox reaction to proton translocation (for every two electrons transferred, four hydrogen ions are translocated across the cytoplasmic membrane), and thus conserves the redox energy in a proton gradient. This subunit may bind ubiquinone. In Cereibacter sphaeroides (strain ATCC 17029 / ATH 2.4.9) (Rhodobacter sphaeroides), this protein is NADH-quinone oxidoreductase subunit H 1.